A 257-amino-acid chain; its full sequence is Nickel import system ATP-binding protein NikD (257 aa).

The ABC transporter domain maps to 4–245 (IDIQNLTIKN…HLHPYTERLI (242 aa)). 37 to 44 (GESGAGKS) is an ATP binding site.

Belongs to the ABC transporter superfamily. In terms of assembly, the complex is composed of two ATP-binding proteins (NikD and NikE), two transmembrane proteins (NikB and NikC) and a solute-binding protein (NikA).

The protein resides in the cell membrane. The catalysed reaction is Ni(2+)(out) + ATP + H2O = Ni(2+)(in) + ADP + phosphate + H(+). In terms of biological role, part of the ABC transporter complex NikABCDE (Opp2) involved in nickel import. Probably responsible for energy coupling to the transport system. The chain is Nickel import system ATP-binding protein NikD from Staphylococcus aureus (strain MRSA252).